Consider the following 137-residue polypeptide: MRASPTSPPEQVVVDASAMVDLLARTSDRCSAVRARLARTAMHAPAHFDAEVLSALGRMQRAGALTVAYVDAALEELRQVPVTRHGLSSLLAGAWSRRDTLRLTDALYVELAETAGLVLLTTDERLARAWPSAHAIG.

A PINc domain is found at 12 to 129 (VVVDASAMVD…LTTDERLARA (118 aa)). The Mg(2+) site is built by Asp15 and Asp105.

This sequence belongs to the PINc/VapC protein family. Requires Mg(2+) as cofactor.

In terms of biological role, toxic component of a type II toxin-antitoxin (TA) system. An RNase. Its toxic effect is neutralized by coexpression with cognate antitoxin VapB3. This chain is Ribonuclease VapC3, found in Mycobacterium tuberculosis (strain CDC 1551 / Oshkosh).